Here is a 246-residue protein sequence, read N- to C-terminus: MKPSDVRSKAFAMPLTSPAFPMGPYRFVDREFLIITYRTDPDRLREIVPEPLQVTEPLVHYEFIRMADSTGFGDYTESGQVIPVEYEGQPGGYTLAMYLDDHPPIAGGRELWGFPKKLASPTLHVNTDHILGTLDYGKVRVATGTMGYKHKELDIDEQTKRLAGPNFLLKIIPHVDGTARVCELVRYYMQDIKMKGAWTGPASLELAPHALAPVADLPVLEIVEARHLVADLTLGLGEVVYDYLAQ.

The active-site Schiff-base intermediate with acetoacetate is Lys116.

It belongs to the ADC family.

It carries out the reaction acetoacetate + H(+) = acetone + CO2. Catalyzes the conversion of acetoacetate to acetone and carbon dioxide. In Burkholderia cenocepacia (strain HI2424), this protein is Acetoacetate decarboxylase.